We begin with the raw amino-acid sequence, 326 residues long: ATP synthase subunit b 2 (326 aa).

Residues 2–22 form a helical membrane-spanning segment; the sequence is LIDWFTVVAQALNFLILVWLL. 2 stretches are compositionally biased toward basic and acidic residues: residues 275-298 and 306-326; these read QQGR…RKEN and PPPE…IGSP. The interval 275–326 is disordered; that stretch reads QQGRKEGRAVQNWDKAESEIRKENLSPAKTEPPPEAKAKPKPEEPKPEIGSP.

It belongs to the ATPase B chain family. In terms of assembly, F-type ATPases have 2 components, F(1) - the catalytic core - and F(0) - the membrane proton channel. F(1) has five subunits: alpha(3), beta(3), gamma(1), delta(1), epsilon(1). F(0) has three main subunits: a(1), b(2) and c(10-14). The alpha and beta chains form an alternating ring which encloses part of the gamma chain. F(1) is attached to F(0) by a central stalk formed by the gamma and epsilon chains, while a peripheral stalk is formed by the delta and b chains.

It is found in the cell inner membrane. F(1)F(0) ATP synthase produces ATP from ADP in the presence of a proton or sodium gradient. F-type ATPases consist of two structural domains, F(1) containing the extramembraneous catalytic core and F(0) containing the membrane proton channel, linked together by a central stalk and a peripheral stalk. During catalysis, ATP synthesis in the catalytic domain of F(1) is coupled via a rotary mechanism of the central stalk subunits to proton translocation. Its function is as follows. Component of the F(0) channel, it forms part of the peripheral stalk, linking F(1) to F(0). The polypeptide is ATP synthase subunit b 2 (Albidiferax ferrireducens (strain ATCC BAA-621 / DSM 15236 / T118) (Rhodoferax ferrireducens)).